The primary structure comprises 132 residues: MKGIRSNIPRALNAGAKVPCVDNTGAKVVEIISVKKYRGVKNRMPCAGIGDMCVVSVKKGTPEMRKQVLLAVVVRQKQEFRRPDGLRVSFEDNAMVITDEEGIPKGTDIKGPIAREVAERYPKIGTTASIIV.

This sequence belongs to the universal ribosomal protein uL14 family. As to quaternary structure, part of the 50S ribosomal subunit. Forms a cluster with proteins L3 and L24e, part of which may contact the 16S rRNA in 2 intersubunit bridges.

In terms of biological role, binds to 23S rRNA. Forms part of two intersubunit bridges in the 70S ribosome. The chain is Large ribosomal subunit protein uL14 from Methanosarcina barkeri (strain Fusaro / DSM 804).